Here is a 201-residue protein sequence, read N- to C-terminus: Potassium-transporting ATPase KdpC subunit (201 aa).

Residues 9–29 (ILVMLALTLITGLLYPLAMTV) traverse the membrane as a helical segment. Polar residues-rich tracts occupy residues 73–84 (TTAADPNDSTKT) and 91–101 (AANSSGSNLGP). A disordered region spans residues 73–103 (TTAADPNDSTKTVPAPYNAANSSGSNLGPTS).

This sequence belongs to the KdpC family. In terms of assembly, the system is composed of three essential subunits: KdpA, KdpB and KdpC.

It is found in the cell inner membrane. Its function is as follows. Part of the high-affinity ATP-driven potassium transport (or Kdp) system, which catalyzes the hydrolysis of ATP coupled with the electrogenic transport of potassium into the cytoplasm. This subunit acts as a catalytic chaperone that increases the ATP-binding affinity of the ATP-hydrolyzing subunit KdpB by the formation of a transient KdpB/KdpC/ATP ternary complex. This chain is Potassium-transporting ATPase KdpC subunit, found in Bradyrhizobium sp. (strain BTAi1 / ATCC BAA-1182).